The sequence spans 218 residues: Cytidylate kinase (218 aa).

An ATP-binding site is contributed by 11–19 (GPGASGKGT).

Belongs to the cytidylate kinase family. Type 1 subfamily.

It is found in the cytoplasm. It carries out the reaction CMP + ATP = CDP + ADP. It catalyses the reaction dCMP + ATP = dCDP + ADP. The sequence is that of Cytidylate kinase from Neisseria meningitidis serogroup A / serotype 4A (strain DSM 15465 / Z2491).